Here is a 432-residue protein sequence, read N- to C-terminus: MEKLTLSPISRIDGEINLPGSKSLSNRALLLAALAKGTTQVTNLLDSDDIRYMLNALKALGVNYQLSDDKTVCVVEGIGGAFQWQNGLSLFLGNAGTAMRPLAAALCLKGDTESEVILTGEPRMKERPIKHLVDALRQTGANIQYLENDGYPPLAIRNQGIFGGKVQIDGSISSQFLTALLMAAPLGEGDMEIEILGELVSKPYIDITPAMMKDFGINVDDYNYQRFLIKGKQYYISPQTYLVEGDASSASYFLAAAAIKGKVKVTGIGRNSIQGDRLFADVLAQMGAKVTWGEDFIQVEKSELKGIDMDMNHIPDAAMTIAITALFAQGETVIRNIYNWRVKETDRLTAIATELRKLGAEVEEGEDFIRIQPLALDKFKHAEIATYNDHRIAMCFSLIALSDTSVTILDPACTAKTFPTYFSEFEKISKNQ.

Lysine 22, serine 23, and arginine 27 together coordinate 3-phosphoshikimate. Lysine 22 serves as a coordination point for phosphoenolpyruvate. Phosphoenolpyruvate-binding residues include glycine 96 and arginine 127. 3-phosphoshikimate contacts are provided by serine 173, serine 174, glutamine 175, serine 201, aspartate 316, asparagine 339, and lysine 343. Glutamine 175 is a binding site for phosphoenolpyruvate. Aspartate 316 (proton acceptor) is an active-site residue. Residues arginine 347, arginine 391, and lysine 416 each contribute to the phosphoenolpyruvate site.

This sequence belongs to the EPSP synthase family. In terms of assembly, monomer.

It is found in the cytoplasm. It carries out the reaction 3-phosphoshikimate + phosphoenolpyruvate = 5-O-(1-carboxyvinyl)-3-phosphoshikimate + phosphate. It participates in metabolic intermediate biosynthesis; chorismate biosynthesis; chorismate from D-erythrose 4-phosphate and phosphoenolpyruvate: step 6/7. Its function is as follows. Catalyzes the transfer of the enolpyruvyl moiety of phosphoenolpyruvate (PEP) to the 5-hydroxyl of shikimate-3-phosphate (S3P) to produce enolpyruvyl shikimate-3-phosphate and inorganic phosphate. The sequence is that of 3-phosphoshikimate 1-carboxyvinyltransferase from Histophilus somni (Haemophilus somnus).